The chain runs to 244 residues: Signal recognition particle receptor subunit beta (244 aa).

Residues 7 to 23 (IIACLLVIGTTIALIAV) traverse the membrane as a helical segment. GTP-binding positions include 45–53 (GPQNSGKTS), 66–69 (TVVS), G90, and 154–157 (NKSE).

This sequence belongs to the SRP receptor beta subunit family. In terms of assembly, heterodimer of an alpha and a beta chain.

The protein localises to the endoplasmic reticulum membrane. Component of the signal recognition particle (SRP) complex receptor (SR). Ensures, in conjunction with the SRP complex, the correct targeting of the nascent secretory proteins to the endoplasmic reticulum membrane system. May mediate the membrane association of SR. The chain is Signal recognition particle receptor subunit beta (SRP102) from Saccharomyces cerevisiae (strain ATCC 204508 / S288c) (Baker's yeast).